The sequence spans 68 residues: Small ribosomal subunit protein bS21 (68 aa).

The interval 35–68 (HYEKPSEKRARERAAAVRRARKMERKRMERDGIK) is disordered. Over residues 37 to 49 (EKPSEKRARERAA) the composition is skewed to basic and acidic residues. Residues 50–59 (AVRRARKMER) show a composition bias toward basic residues.

This sequence belongs to the bacterial ribosomal protein bS21 family.

This chain is Small ribosomal subunit protein bS21, found in Sphingopyxis alaskensis (strain DSM 13593 / LMG 18877 / RB2256) (Sphingomonas alaskensis).